The primary structure comprises 649 residues: Phospholipase A1 PLIP1, chloroplastic (649 aa).

The transit peptide at 1-67 directs the protein to the chloroplast; that stretch reads MAFNTAMAST…NNRILAVSVR (67 aa). The short motif at 420–424 is the GXSXG element; it reads GHSLG. S422 functions as the Acyl-ester intermediate in the catalytic mechanism. Active-site charge relay system residues include D483 and H593.

It belongs to the AB hydrolase superfamily. Lipase family.

Its subcellular location is the plastid. It is found in the chloroplast thylakoid membrane. It catalyses the reaction a 1,2-diacyl-sn-glycero-3-phosphocholine + H2O = a 2-acyl-sn-glycero-3-phosphocholine + a fatty acid + H(+). The catalysed reaction is a 1,2-diacyl-3-O-(beta-D-galactosyl)-sn-glycerol + 2 H2O = 3-beta-D-galactosyl-sn-glycerol + 2 a fatty acid + 2 H(+). In terms of biological role, sn-1-specific phospholipase A1 involved in seed oil biosynthesis. Hydrolyzes polyunsaturated acyl groups from a unique chloroplast-specific phosphatidylglycerol (PG) that contains 16:1 delta 3-trans as its second acyl group. The polyunsaturated acyl groups released by PLIP1 are exported from the chloroplast, reincorporated into phosphatidylcholine (PC), and ultimately enter seed triacylglycerol (TAG). In vitro, possesses broad substrate specificity. Can hydrolyze the galactolipid monogalactosyldiacylglycerol (MGDG), and the phoshpolipids phosphatidylcholine (PC), phosphatidylethanolamine (PE), phosphatidic acid (PA), phosphatidylserine (PS) phosphatidylglycerol (PG) and phosphatidylinositol (PI). This Arabidopsis thaliana (Mouse-ear cress) protein is Phospholipase A1 PLIP1, chloroplastic.